We begin with the raw amino-acid sequence, 116 residues long: Large ribosomal subunit protein uL18 (116 aa).

It belongs to the universal ribosomal protein uL18 family. In terms of assembly, part of the 50S ribosomal subunit; part of the 5S rRNA/L5/L18/L25 subcomplex. Contacts the 5S and 23S rRNAs.

Functionally, this is one of the proteins that bind and probably mediate the attachment of the 5S RNA into the large ribosomal subunit, where it forms part of the central protuberance. This chain is Large ribosomal subunit protein uL18, found in Shewanella piezotolerans (strain WP3 / JCM 13877).